The primary structure comprises 201 residues: 3-isopropylmalate dehydratase small subunit (201 aa).

The protein belongs to the LeuD family. LeuD type 1 subfamily. In terms of assembly, heterodimer of LeuC and LeuD.

The enzyme catalyses (2R,3S)-3-isopropylmalate = (2S)-2-isopropylmalate. The protein operates within amino-acid biosynthesis; L-leucine biosynthesis; L-leucine from 3-methyl-2-oxobutanoate: step 2/4. Functionally, catalyzes the isomerization between 2-isopropylmalate and 3-isopropylmalate, via the formation of 2-isopropylmaleate. The polypeptide is 3-isopropylmalate dehydratase small subunit (Cytophaga hutchinsonii (strain ATCC 33406 / DSM 1761 / CIP 103989 / NBRC 15051 / NCIMB 9469 / D465)).